The primary structure comprises 685 residues: ABC transporter G family member 26 (685 aa).

Residues 65 to 329 enclose the ABC transporter domain; sequence LKFEDVEYKV…FSSLRILPEI (265 aa). 124 to 131 serves as a coordination point for ATP; that stretch reads GPSGSGKT. Residues 414–623 form the ABC transmembrane type-2 domain; sequence DQFLILSRRT…GFRLLLKVQY (210 aa). 6 helical membrane passes run 432-452, 468-488, 518-538, 542-562, 576-596, and 648-668; these read FDKL…LLWW, LMFY…VYVF, MVAH…MAEF, IPCF…SQGA, AGMI…YYVQ, and TINL…AFGY.

The protein belongs to the ABC transporter superfamily. ABCG family. Eye pigment precursor importer (TC 3.A.1.204) subfamily. As to quaternary structure, homo- or heterodimer. In terms of tissue distribution, mostly expressed in flowers, especially in tapetum within anthers.

The protein localises to the cell membrane. It localises to the endoplasmic reticulum membrane. Functionally, mediates the transport of sporopollenin precursors (e.g. polyketides) across the tapetum plasma membrane into the anther locule for polymerization on developing microspore walls, thus being required for male fertility and pollen exine formation and patterning prior to tapetum programmed cell death. This Arabidopsis thaliana (Mouse-ear cress) protein is ABC transporter G family member 26.